The chain runs to 416 residues: 3-isopropylmalate dehydratase large subunit 2 (416 aa).

[4Fe-4S] cluster is bound by residues Cys-296, Cys-356, and Cys-359.

The protein belongs to the aconitase/IPM isomerase family. LeuC type 2 subfamily. As to quaternary structure, heterodimer of LeuC and LeuD. It depends on [4Fe-4S] cluster as a cofactor.

It catalyses the reaction (2R,3S)-3-isopropylmalate = (2S)-2-isopropylmalate. It participates in amino-acid biosynthesis; L-leucine biosynthesis; L-leucine from 3-methyl-2-oxobutanoate: step 2/4. Its function is as follows. Catalyzes the isomerization between 2-isopropylmalate and 3-isopropylmalate, via the formation of 2-isopropylmaleate. This Archaeoglobus fulgidus (strain ATCC 49558 / DSM 4304 / JCM 9628 / NBRC 100126 / VC-16) protein is 3-isopropylmalate dehydratase large subunit 2.